Reading from the N-terminus, the 344-residue chain is MSLRIGVIGTGAIGKEHINRITNKLSGAEIVAVTDVNQEAAQKVVEQYQLNATVYPNDDSLLADENVDAVLVTSWGPAHESSVLKAIKAQKYVFCEKPLATTAEGCMRIVEEEIKVGKRLVQVGFMRRYDSGYVQLKEALDNHVIGEPLMIHCAHRNPTVGDNYTTDMAVVDTLVHEIDVLHWLVNDDYESVQVIYPKKSKNALPHLKDPQIVVIETKGGIVINAEIYVNCKYGYDIQCEIVGEDGIIKLPEPSSISLRKEGRFSTDILMDWQRRFVAAYDVEIQDFIDSIQKKGEVSGPTAWDGYIAAVTTDACVKAQESGQKEKVELKEKPEFYQSFTTVQN.

This sequence belongs to the Gfo/Idh/MocA family. In terms of assembly, homotetramer.

It carries out the reaction myo-inositol + NAD(+) = scyllo-inosose + NADH + H(+). The enzyme catalyses 1D-chiro-inositol + NAD(+) = scyllo-inosine + NADH + H(+). The protein operates within polyol metabolism; myo-inositol degradation into acetyl-CoA; acetyl-CoA from myo-inositol: step 1/7. Its function is as follows. Involved in the oxidation of myo-inositol (MI) and D-chiro-inositol (DCI) to 2-keto-myo-inositol (2KMI or 2-inosose) and 1-keto-D-chiro-inositol (1KDCI), respectively. Can also use D-glucose and D-xylose, and shows a trace of activity with D-ribose and D-fructose. The sequence is that of Inositol 2-dehydrogenase/D-chiro-inositol 3-dehydrogenase (iolG) from Bacillus subtilis (strain 168).